The sequence spans 149 residues: Flagellar basal-body protein FlbY (149 aa).

As to quaternary structure, the basal body constitutes a major portion of the flagellar organelle and consists of five rings (E,L,P,S, and M) mounted on a central rod.

The protein localises to the bacterial flagellum basal body. The protein is Flagellar basal-body protein FlbY (flbY) of Caulobacter vibrioides (strain ATCC 19089 / CIP 103742 / CB 15) (Caulobacter crescentus).